The following is a 165-amino-acid chain: Sulfopyruvate decarboxylase subunit alpha (165 aa).

This sequence belongs to the ComD family. Heterododecamer composed of 6 subunits alpha and 6 subunits beta.

The enzyme catalyses 3-sulfopyruvate + H(+) = sulfoacetaldehyde + CO2. It functions in the pathway cofactor biosynthesis; coenzyme M biosynthesis; sulfoacetaldehyde from phosphoenolpyruvate and sulfite: step 4/4. Its function is as follows. Involved in the biosynthesis of the coenzyme M (2-mercaptoethanesulfonic acid). Catalyzes the decarboxylation of sulfopyruvate to sulfoacetaldehyde. The polypeptide is Sulfopyruvate decarboxylase subunit alpha (Methanothermobacter thermautotrophicus (strain ATCC 29096 / DSM 1053 / JCM 10044 / NBRC 100330 / Delta H) (Methanobacterium thermoautotrophicum)).